The primary structure comprises 239 residues: Protein Thf1 (239 aa).

The stretch at 183–219 (ERVKKDLELYRSNLDRLKQARAIVEEMVKAARRQQER) forms a coiled coil. Basic and acidic residues predominate over residues 211–221 (KAARRQQERRQ). The segment at 211-239 (KAARRQQERRQSTASLPETPAADRRESSG) is disordered.

Belongs to the THF1 family.

In terms of biological role, may be involved in photosynthetic membrane biogenesis. The sequence is that of Protein Thf1 from Synechococcus sp. (strain JA-3-3Ab) (Cyanobacteria bacterium Yellowstone A-Prime).